The following is a 317-amino-acid chain: Transaldolase 2 (317 aa).

The active-site Schiff-base intermediate with substrate is the K132.

Belongs to the transaldolase family. Type 1 subfamily. In terms of assembly, homodimer.

It is found in the cytoplasm. It catalyses the reaction D-sedoheptulose 7-phosphate + D-glyceraldehyde 3-phosphate = D-erythrose 4-phosphate + beta-D-fructose 6-phosphate. It participates in carbohydrate degradation; pentose phosphate pathway; D-glyceraldehyde 3-phosphate and beta-D-fructose 6-phosphate from D-ribose 5-phosphate and D-xylulose 5-phosphate (non-oxidative stage): step 2/3. Transaldolase is important for the balance of metabolites in the pentose-phosphate pathway. This Pectobacterium atrosepticum (strain SCRI 1043 / ATCC BAA-672) (Erwinia carotovora subsp. atroseptica) protein is Transaldolase 2.